The following is a 469-amino-acid chain: IAA-alanine resistance protein 1 (469 aa).

An N-terminal signal peptide occupies residues 1–28; it reads MSFSLRKLLVPILVLVLFLDLCVESGFS. The tract at residues 33-58 is disordered; it reads ARDDHVHHHGGGCSHSHDHDHDHDHD. Residues 47 to 58 show a composition bias toward basic and acidic residues; it reads HSHDHDHDHDHD. The next 2 helical transmembrane spans lie at 114–134 and 141–161; these read CSLLVSLASLICLVLLPIMFV and WFVDSLALFGAGAMLGDAFLH. The tract at residues 170–197 is disordered; the sequence is GHSHSNDHHENHDHHDHSHSDSPSHSHS. A compositionally biased stretch (basic and acidic residues) spans 173 to 193; the sequence is HSNDHHENHDHHDHSHSDSPS. The chain crosses the membrane as a helical span at residues 201–221; the sequence is LSVGLSVLAGIVVFLLVEKLV. Residues 228 to 315 form a disordered region; that stretch reads SSGSNTWGHH…GKSDKPEQVE (88 aa). Basic residues predominate over residues 235–246; it reads GHHHHHHHAGSK. Residues 247-256 show a composition bias toward basic and acidic residues; that stretch reads KLKDEGDHNN. Over residues 257 to 279 the composition is skewed to polar residues; sequence LDQQSSSDAIVNSSEKVSGGSTD. Basic and acidic residues predominate over residues 292 to 315; the sequence is ATDKSDSGTEITSDGKSDKPEQVE. Helical transmembrane passes span 387–407, 415–435, and 448–468; these read LFFNFLSALVALAGTALVLVW, SLIEGFTAGGFIYIAVAGVLA, and SACHLISLILGMSVALCISLI.

This sequence belongs to the ZIP transporter (TC 2.A.5) family. KE4/Catsup subfamily.

The protein resides in the membrane. In terms of biological role, may participate in auxin metabolism or response. Probable transporter. The chain is IAA-alanine resistance protein 1 (IAR1) from Arabidopsis thaliana (Mouse-ear cress).